A 352-amino-acid polypeptide reads, in one-letter code: Chorismate synthase (352 aa).

NADP(+) is bound at residue Arg48. FMN contacts are provided by residues 125 to 127, 237 to 238, Gly278, 293 to 297, and Arg319; these read RSS, NA, and KPTSS.

Belongs to the chorismate synthase family. As to quaternary structure, homotetramer. It depends on FMNH2 as a cofactor.

The enzyme catalyses 5-O-(1-carboxyvinyl)-3-phosphoshikimate = chorismate + phosphate. It functions in the pathway metabolic intermediate biosynthesis; chorismate biosynthesis; chorismate from D-erythrose 4-phosphate and phosphoenolpyruvate: step 7/7. Its function is as follows. Catalyzes the anti-1,4-elimination of the C-3 phosphate and the C-6 proR hydrogen from 5-enolpyruvylshikimate-3-phosphate (EPSP) to yield chorismate, which is the branch point compound that serves as the starting substrate for the three terminal pathways of aromatic amino acid biosynthesis. This reaction introduces a second double bond into the aromatic ring system. This chain is Chorismate synthase, found in Francisella tularensis subsp. mediasiatica (strain FSC147).